We begin with the raw amino-acid sequence, 264 residues long: 2',3'-cyclic-nucleotide 2'-phosphodiesterase (264 aa).

The Fe cation site is built by Asp-8, Glu-39, Asn-40, and Asn-67. His-68 acts as the Proton donor in catalysis. The Fe cation site is built by His-150, His-175, and His-177.

It belongs to the YmdB-like family. Homodimer. Fe(2+) is required as a cofactor. The cofactor is Fe(3+).

Its subcellular location is the cytoplasm. The catalysed reaction is a nucleoside 2',3'-cyclic phosphate + H2O = a nucleoside 3'-phosphate + H(+). In terms of biological role, plays a central, regulatory role in the late adaptive responses and affects the levels of many genes. May act via regulation of cAMP levels. Decreases the expression of motility genes and induces genes involved in biofilm formation, by controlling the expression of SlrR. Required for formation of intercellular nanotubes that bridge neighboring cells to allow molecular exchange. Plays a key role in directing the early stages of colony development. In vitro, has a metal-dependent phosphodiesterase activity against 2',3'-cAMP and 2',3'-cGMP. Also has 3',5'-cyclic-nucleotide phosphodiesterase activity, but cannot use cyclic di-AMP or cyclic di-GMP, and does not have phosphatase activity. The sequence is that of 2',3'-cyclic-nucleotide 2'-phosphodiesterase (ymdB) from Bacillus subtilis (strain 168).